We begin with the raw amino-acid sequence, 151 residues long: MERPEPELIRQSWRAVRRSPLEHGTVLFARLFDLEPDLLPLFQYNCRQFSSPEDCLSSPEFLDHIRKVMLVIDTAVTNVEDLSSLEEYLAGLGKKHRAVGVKLSSFSTVGESLLYMLEKCLGPAFTPAVRAAWSQLYGAVVQAMSRGWDGD.

The Globin domain occupies 1 to 149; it reads MERPEPELIR…VVQAMSRGWD (149 aa). 2 residues coordinate heme b: histidine 64 and histidine 96.

Belongs to the globin family. Monomer. Homodimer and homotetramer; disulfide-linked. Mainly monomeric but also detected as part of homodimers and homotetramers. Interacts with 14-3-3 proteins; regulates the phosphorylation of NGB. Could interact (ferrous form) with G-alpha(i) proteins (GTP-bound form). Post-translationally, phosphorylated during hypoxia by ERK1/ERK2. Phosphorylation regulates the heme pocket hexacoordination preventing the association of His-64 with the heme metal center. Thereby, promotes the access of dioxygen and nitrite to the heme and stimulates the nitrite reductase activity. Phosphorylation during hypoxia is stabilized by 14-3-3 proteins.

It localises to the cytoplasm. The protein localises to the cytosol. It is found in the mitochondrion matrix. It catalyses the reaction Fe(III)-heme b-[protein] + nitric oxide + H2O = Fe(II)-heme b-[protein] + nitrite + 2 H(+). Functionally, monomeric globin with a bis-histidyl six-coordinate heme-iron atom through which it can bind dioxygen, carbon monoxide and nitric oxide. Could help transport oxygen and increase its availability to the metabolically active neuronal tissues, though its low quantity in tissues as well as its high affinity for dioxygen, which may limit its oxygen-releasing ability, argue against it. The ferrous/deoxygenated form exhibits a nitrite reductase activity and it could produce nitric oxide which in turn inhibits cellular respiration in response to hypoxia. In its ferrous/deoxygenated state, it may also exhibit GDI (Guanine nucleotide Dissociation Inhibitor) activity toward heterotrimeric G-alpha proteins, thereby regulating signal transduction to facilitate neuroprotective responses in the wake of hypoxia and associated oxidative stress. The polypeptide is Neuroglobin (Canis lupus familiaris (Dog)).